Reading from the N-terminus, the 896-residue chain is Alanine--tRNA ligase (896 aa).

Residues 439–456 (QRAKDDAKAKKGQHRDAS) are compositionally biased toward basic and acidic residues. The disordered stretch occupies residues 439 to 459 (QRAKDDAKAKKGQHRDASAYR). Residues His-579, His-583, Cys-681, and His-685 each coordinate Zn(2+).

The protein belongs to the class-II aminoacyl-tRNA synthetase family. The cofactor is Zn(2+).

The protein resides in the cytoplasm. The catalysed reaction is tRNA(Ala) + L-alanine + ATP = L-alanyl-tRNA(Ala) + AMP + diphosphate. In terms of biological role, catalyzes the attachment of alanine to tRNA(Ala) in a two-step reaction: alanine is first activated by ATP to form Ala-AMP and then transferred to the acceptor end of tRNA(Ala). Also edits incorrectly charged Ser-tRNA(Ala) and Gly-tRNA(Ala) via its editing domain. The protein is Alanine--tRNA ligase of Nocardioides sp. (strain ATCC BAA-499 / JS614).